Reading from the N-terminus, the 646-residue chain is RNA-binding protein RMD9, mitochondrial (646 aa).

Residues 1–14 (MMLRRNAVRSLKTM) constitute a mitochondrion transit peptide. Positions 15–51 (EISVSNVVNSGSIAMLRGKLANVVLSDRTYHSSPIFH) are cleaved as a propeptide — removed in mature form. A PPR1 repeat occupies 209-238 (VSGYGATHLLTSFKELSFDDDCIRIWEASK). Residues 251–282 (EPKVVGFMLPLLYAKTRSLTEPNELYNQIIQS) form a PPR2 repeat. A PPR3 repeat occupies 288–317 (PNLYSGLIKVFIKAEDYEKALSLFGQLCEK). Residues 323–353 (YGYLIETHLSFIGDSKNLTLAESFFDKIIND) form a PPR4 repeat. Residues 363-394 (VSTVNSFLQNIWKAQNDFDHVYRIWEKAVKFY) form a PPR5 repeat. The stretch at 401-439 (GILSSLNNTFFTIFFENYINDNINGFRKLQEIITFYSGV) is one PPR6 repeat. The stretch at 444–473 (EPFFNVMLTRASIWHERSIIDFIDKNYTLY) is one PPR7 repeat. Residues 481-514 (SYRILLKSLGSIDNTNNEEILDRWLELVKKLNEL) form a PPR8 repeat.

This sequence belongs to the RMD9 family. In terms of assembly, monomer. Post-translationally, phosphorylated. Phosphorylation promotes binding to RNA.

It localises to the mitochondrion inner membrane. Functionally, binds the RNA motif 5'-AAUAA[U/C]AUUCUU-3' in the 3'-UTR of mitochondrial mRNAs. Involved in the processing or stability of mitochondrial mRNAs. The chain is RNA-binding protein RMD9, mitochondrial from Saccharomyces cerevisiae (strain ATCC 204508 / S288c) (Baker's yeast).